The following is a 134-amino-acid chain: Profilin-4 (134 aa).

Cysteine 13 and cysteine 118 are disulfide-bonded. The Involved in PIP2 interaction signature appears at alanine 84–threonine 100. A Phosphothreonine modification is found at threonine 114.

The protein belongs to the profilin family. In terms of assembly, occurs in many kinds of cells as a complex with monomeric actin in a 1:1 ratio. In terms of processing, phosphorylated by MAP kinases.

The protein localises to the cytoplasm. It localises to the cytoskeleton. Functionally, binds to actin and affects the structure of the cytoskeleton. At high concentrations, profilin prevents the polymerization of actin, whereas it enhances it at low concentrations. In Olea europaea (Common olive), this protein is Profilin-4.